The primary structure comprises 186 residues: Elongation factor P (186 aa).

This sequence belongs to the elongation factor P family.

Its subcellular location is the cytoplasm. It participates in protein biosynthesis; polypeptide chain elongation. Its function is as follows. Involved in peptide bond synthesis. Stimulates efficient translation and peptide-bond synthesis on native or reconstituted 70S ribosomes in vitro. Probably functions indirectly by altering the affinity of the ribosome for aminoacyl-tRNA, thus increasing their reactivity as acceptors for peptidyl transferase. In Shewanella sp. (strain W3-18-1), this protein is Elongation factor P.